Consider the following 314-residue polypeptide: N-acyl-aromatic-L-amino acid amidohydrolase (carboxylate-forming) B (314 aa).

Zn(2+) is bound by residues His19 and Glu22. Residues Arg63 and Asn70 to Arg71 contribute to the substrate site. His116 is a binding site for Zn(2+). Positions 178 and 289 each coordinate substrate.

The protein belongs to the AspA/AstE family. Aspartoacylase subfamily. Homotetramer. The cofactor is Zn(2+).

The protein resides in the apical cell membrane. Its subcellular location is the cytoplasm. It catalyses the reaction an N-acyl-aromatic L-alpha-amino acid + H2O = an aromatic L-alpha-amino acid + a carboxylate. It carries out the reaction an N-acetyl-L-cysteine-S-conjugate + H2O = an S-substituted L-cysteine + acetate. In terms of biological role, plays an important role in deacetylating mercapturic acids in kidney proximal tubules. The protein is N-acyl-aromatic-L-amino acid amidohydrolase (carboxylate-forming) B (acy3.2) of Danio rerio (Zebrafish).